Here is a 100-residue protein sequence, read N- to C-terminus: Elevenin (100 aa).

The N-terminal stretch at 1-24 is a signal peptide; sequence MALSQKALLVLVLSMLLTASDSWA. Cys-29 and Cys-38 are joined by a disulfide. A propeptide spanning residues 44-100 is cleaved from the precursor; that stretch reads KRGGDSLSVGGSAELDDTLTDPFLKSEEPKEWRELTRLSRVLQTFLSHPTGEMEQHD.

It belongs to the elevenin family. Monomer. In terms of tissue distribution, expressed by the venom duct.

Its subcellular location is the secreted. In terms of biological role, may mimic the function of prey elevenin neuropeptide. In vivo, intracranial injection in mice induces hyperactivity. The sequence is that of Elevenin from Conus ammiralis (Admiral cone).